The sequence spans 297 residues: uncharacterized protein (297 aa).

2 consecutive transmembrane segments (helical) span residues 17–37 (LALSGGGFYGFAVVGALKEIF) and 48–68 (TISGVSVGSIIATMLAIGYSI). In terms of domain architecture, PNPLA spans 17 to 196 (LALSGGGFYG…TLNYPITLFD (180 aa)). The GXGXXG signature appears at 21–26 (GGGFYG). The short motif at 51-55 (GVSVG) is the GXSXG element. Ser-53 (nucleophile) is an active-site residue. N-linked (GlcNAc...) asparagine; by host glycosylation occurs at Asn-122. The active-site Proton acceptor is Asp-183. The DGA/G signature appears at 183–185 (DGG). Asn-239 is a glycosylation site (N-linked (GlcNAc...) asparagine; by host).

It is found in the membrane. In terms of biological role, probable lipid hydrolase. This is an uncharacterized protein from Acanthamoeba polyphaga mimivirus (APMV).